The chain runs to 146 residues: UPF0178 protein R01393 (146 aa).

It belongs to the UPF0178 family.

The protein is UPF0178 protein R01393 of Rhizobium meliloti (strain 1021) (Ensifer meliloti).